The sequence spans 82 residues: Immediate early response 3-interacting protein 1 (82 aa).

The next 2 membrane-spanning stretches (helical) occupy residues 2-22 (AFTL…IAVL) and 62-82 (VMRV…LLFG).

Belongs to the YOS1 family.

The protein localises to the endoplasmic reticulum membrane. Functionally, regulator of endoplasmic reticulum secretion that acts as a key determinant of brain size. Required for secretion of extracellular matrix proteins. Required for correct brain development by depositing sufficient extracellular matrix proteins for tissue integrity and the proliferation of neural progenitors. Acts as a regulator of the unfolded protein response (UPR). This chain is Immediate early response 3-interacting protein 1, found in Rattus norvegicus (Rat).